The chain runs to 91 residues: Small ribosomal subunit protein uS19 (91 aa).

Belongs to the universal ribosomal protein uS19 family.

In terms of biological role, protein S19 forms a complex with S13 that binds strongly to the 16S ribosomal RNA. The protein is Small ribosomal subunit protein uS19 of Bordetella bronchiseptica (strain ATCC BAA-588 / NCTC 13252 / RB50) (Alcaligenes bronchisepticus).